Reading from the N-terminus, the 245-residue chain is 1-(5-phosphoribosyl)-5-[(5-phosphoribosylamino)methylideneamino] imidazole-4-carboxamide isomerase (245 aa).

The active-site Proton acceptor is the aspartate 12. Aspartate 131 (proton donor) is an active-site residue.

This sequence belongs to the HisA/HisF family.

Its subcellular location is the cytoplasm. The catalysed reaction is 1-(5-phospho-beta-D-ribosyl)-5-[(5-phospho-beta-D-ribosylamino)methylideneamino]imidazole-4-carboxamide = 5-[(5-phospho-1-deoxy-D-ribulos-1-ylimino)methylamino]-1-(5-phospho-beta-D-ribosyl)imidazole-4-carboxamide. The protein operates within amino-acid biosynthesis; L-histidine biosynthesis; L-histidine from 5-phospho-alpha-D-ribose 1-diphosphate: step 4/9. In Thermobifida fusca (strain YX), this protein is 1-(5-phosphoribosyl)-5-[(5-phosphoribosylamino)methylideneamino] imidazole-4-carboxamide isomerase.